A 297-amino-acid polypeptide reads, in one-letter code: Cell division protein FtsX (297 aa).

Topologically, residues 1 to 24 (MKAKTLSRHLREGVKNLSRNGWMT) are cytoplasmic. A helical membrane pass occupies residues 25-45 (FASVSAVTVTLLLVGVFLTAI). The Extracellular segment spans residues 46 to 171 (MNMNHFATKV…LFDTVKTGRN (126 aa)). A helical transmembrane segment spans residues 172 to 192 (IGIVLIAGLLFTAMFLISNTI). The Cytoplasmic segment spans residues 193–219 (KITIYARSTEIEIMKLVGATNWFIRWP). A helical membrane pass occupies residues 220 to 240 (FLLEGLFLGVLGSIIPIGLIL). At 241-270 (VTYNSLQGMFNEKLGGTIFELLPYSPFVFQ) the chain is on the extracellular side. A helical membrane pass occupies residues 271-291 (LAGLLVLIGALIGMWGSVMSI). Topologically, residues 292–297 (RRFLKV) are cytoplasmic.

Belongs to the ABC-4 integral membrane protein family. FtsX subfamily. In terms of assembly, interacts with FtsE.

It localises to the cell membrane. Part of the ABC transporter FtsEX involved in asymmetric cellular division facilitating the initiation of sporulation. The sequence is that of Cell division protein FtsX from Bacillus anthracis.